The primary structure comprises 475 residues: Gelsolin-like protein 1 (475 aa).

The tract at residues 1–131 (MGGTSLDPAL…GYRHVDDQFK (131 aa)) is actin binding, actin severing, Ca-sensitive. The interval 1–239 (MGGTSLDPAL…VRKVSKGKDD (239 aa)) is necessary for barbed end capping activity. The stretch at 27–105 (FVLEPVPEVD…IQNYESPLFL (79 aa)) is one Gelsolin-like 1 repeat. The tract at residues 70 to 73 (DEIG) is actin-actin interfilament contact point. Residues 106–147 (SYFPDGIRYVSGGYESGYRHVDDQFKNWKPHLFHCKGKRNVR) are required for synapse elimination during development. The segment at 133–227 (WKPHLFHCKG…STFWSYFGGV (95 aa)) is required for phosphatidylinositol 4,5-bisphosphate binding and regulation. 3 Gelsolin-like repeats span residues 148–208 (CTEV…KVHI), 275–341 (RKEQ…STQF), and 375–447 (EIAN…PPTF). The segment at 240–475 (DDNYWKRLTE…VQNMRRLLFH (236 aa)) is F- and G-actin binding, Ca-independent. The interval 248–348 (TEQITLWKVS…TQFTQWFRDW (101 aa)) is inhibitory for phosphatidylinositol 4,5-bisphosphate binding activity.

The protein belongs to the villin/gelsolin family. Monomer. Binds to actin monomers and filaments. Post-translationally, cleavage by caspase ced-3 activates its actin-severing function and is required for the elimination of presynaptic components during development.

The protein resides in the cytoplasm. It localises to the cytoskeleton. Its function is as follows. Calcium-regulated, actin-modulating protein that binds to the plus (or barbed) ends of actin monomers or filaments, preventing monomer exchange (end-blocking or capping). Binds actin but does not nucleate actin polymerization, albeit slows down elongation by blocking the barbed ends. By promoting actin depolymerization, required for the elimination of presynaptic components downstream of the egl-1, ced-4 and ced-3 apoptotic pathway during larval development. In Caenorhabditis elegans, this protein is Gelsolin-like protein 1.